A 132-amino-acid polypeptide reads, in one-letter code: uncharacterized protein (132 aa).

To M.jannaschii MJ0661.

This is an uncharacterized protein from Helicobacter pylori (strain J99 / ATCC 700824) (Campylobacter pylori J99).